A 390-amino-acid polypeptide reads, in one-letter code: Magnesium-protoporphyrin IX monomethyl ester [oxidative] cyclase (390 aa).

The protein belongs to the AcsF family. It depends on Fe cation as a cofactor.

The catalysed reaction is Mg-protoporphyrin IX 13-monomethyl ester + 3 NADPH + 3 O2 + 2 H(+) = 3,8-divinyl protochlorophyllide a + 3 NADP(+) + 5 H2O. The protein operates within porphyrin-containing compound metabolism; chlorophyll biosynthesis (light-independent). In terms of biological role, catalyzes the formation of the isocyclic ring in chlorophyll biosynthesis. Mediates the cyclase reaction, which results in the formation of divinylprotochlorophyllide (Pchlide) characteristic of all chlorophylls from magnesium-protoporphyrin IX 13-monomethyl ester (MgPMME). The sequence is that of Magnesium-protoporphyrin IX monomethyl ester [oxidative] cyclase from Prochlorococcus marinus (strain MIT 9312).